The chain runs to 288 residues: 4-hydroxy-tetrahydrodipicolinate synthase (288 aa).

Thr-43 serves as a coordination point for pyruvate. The active-site Proton donor/acceptor is the Tyr-131. The active-site Schiff-base intermediate with substrate is the Lys-160. Residue Ile-200 participates in pyruvate binding.

This sequence belongs to the DapA family. Homotetramer; dimer of dimers.

The protein localises to the cytoplasm. It catalyses the reaction L-aspartate 4-semialdehyde + pyruvate = (2S,4S)-4-hydroxy-2,3,4,5-tetrahydrodipicolinate + H2O + H(+). It functions in the pathway amino-acid biosynthesis; L-lysine biosynthesis via DAP pathway; (S)-tetrahydrodipicolinate from L-aspartate: step 3/4. In terms of biological role, catalyzes the condensation of (S)-aspartate-beta-semialdehyde [(S)-ASA] and pyruvate to 4-hydroxy-tetrahydrodipicolinate (HTPA). This chain is 4-hydroxy-tetrahydrodipicolinate synthase, found in Methanococcus aeolicus (strain ATCC BAA-1280 / DSM 17508 / OCM 812 / Nankai-3).